Here is a 152-residue protein sequence, read N- to C-terminus: Nucleoside diphosphate kinase (152 aa).

Positions 11, 59, 87, 93, 104, and 114 each coordinate ATP. The active-site Pros-phosphohistidine intermediate is the His117.

Belongs to the NDK family. Homotetramer. Mg(2+) serves as cofactor.

The protein localises to the cytoplasm. The enzyme catalyses a 2'-deoxyribonucleoside 5'-diphosphate + ATP = a 2'-deoxyribonucleoside 5'-triphosphate + ADP. It catalyses the reaction a ribonucleoside 5'-diphosphate + ATP = a ribonucleoside 5'-triphosphate + ADP. Functionally, major role in the synthesis of nucleoside triphosphates other than ATP. The ATP gamma phosphate is transferred to the NDP beta phosphate via a ping-pong mechanism, using a phosphorylated active-site intermediate. The sequence is that of Nucleoside diphosphate kinase from Prochlorococcus marinus (strain MIT 9303).